The chain runs to 308 residues: MASSHTVLMRLVASAYSIAQKAGTIVRCVIAEGDLGIVQKTSATDLQTKADRLVQMSICSSLARKFPKLTIIGEEDLPPGEVDQELIEDGQWEEILKQPCPSQYSAIKEEDLVVWVDPLDGTKEYTEGLLDNVTVLIGIAYEGKAIAGIINQPYYNYQAGPDAALGRTIWGVLGLGAFGFQLKEAPAGKHIITTTRSHSNQLVTDCISAMNPDTVLRVGGAGNKIIQLIEGKASAYVFASPGCKKWDTCAPEVILHAVGGKLTDIHGNALQYNKEVKHMNSAGVLAALRNYEYYASHVPESVKNALIP.

Ala-2 bears the N-acetylalanine mark. Asp-51 functions as the Proton acceptor in the catalytic mechanism. Mg(2+) is bound by residues Glu-74, Asp-117, Leu-119, and Asp-120. Catalysis depends on Thr-122, which acts as the Proton acceptor. Phosphothreonine is present on Thr-122. Residues Thr-195, His-198, Gly-220, and Lys-224 each contribute to the AMP site. Ser-240 is subject to Phosphoserine. The residue at position 244 (Lys-244) is an N6-succinyllysine. Position 247 (Asp-247) interacts with Mg(2+).

Belongs to the inositol monophosphatase superfamily. Requires Mg(2+) as cofactor. In terms of tissue distribution, widely expressed. Highly expressed in kidney.

It catalyses the reaction adenosine 3',5'-bisphosphate + H2O = AMP + phosphate. The enzyme catalyses adenosine 2',5'-bisphosphate + H2O = AMP + phosphate. The catalysed reaction is 3'-phosphoadenylyl sulfate + H2O = adenosine 5'-phosphosulfate + phosphate. It carries out the reaction 1D-myo-inositol 1,4-bisphosphate + H2O = 1D-myo-inositol 4-phosphate + phosphate. It catalyses the reaction 1D-myo-inositol 1,3,4-trisphosphate + H2O = 1D-myo-inositol 3,4-bisphosphate + phosphate. With respect to regulation, uncompetitively inhibited by Li(+) (IC(50)=157 uM). PAP hydrolysis is competitively inhibited by PAPS (IC(50)=0.7 uM) and by inositol 1,4-bisphosphate (IC(50)=15 uM). Its function is as follows. Phosphatase that converts 3'(2')-phosphoadenosine 5'-phosphate (PAP) to AMP and adenosine 3'-phosphate 5'-phosphosulfate (PAPS) to adenosine 5'-phosphosulfate (APS). Is also able to hydrolyze inositol 1,4-bisphosphate (Ins(1,4)P2) and inositol 1,3,4-trisphosphate (Ins(1,3,4)P3), and is not active on Ins(1)P, Ins(4)P, Ins(3,4)P2, Ins(1,4,5)P3, Ins(1,3,4,5)P4, Ins(1,3,4,5,6)P5 or InsP6. Probably prevents the toxic accumulation of PAP, a compound which inhibits a variety of proteins, including PAPS-utilizing enzymes such as sulfotransferases, and RNA processing enzymes. Could also play a role in inositol recycling and phosphoinositide metabolism. This Mus musculus (Mouse) protein is 3'(2'),5'-bisphosphate nucleotidase 1 (Bpnt1).